The sequence spans 166 residues: Interferon gamma (166 aa).

Residues 1–23 (MKYTSSFLALLLCVLLGFSGSYG) form the signal peptide. Gln-24 carries the pyrrolidone carboxylic acid modification. N-linked (GlcNAc...) asparagine glycans are attached at residues Asn-39 and Asn-106.

This sequence belongs to the type II (or gamma) interferon family. As to quaternary structure, homodimer. Interacts with IFNGR1 (via extracellular domain); this interaction promotes IFNGR1 dimerization. In terms of tissue distribution, released primarily from activated T lymphocytes.

The protein localises to the secreted. Its function is as follows. Type II interferon produced by immune cells such as T-cells and NK cells that plays crucial roles in antimicrobial, antiviral, and antitumor responses by activating effector immune cells and enhancing antigen presentation. Primarily signals through the JAK-STAT pathway after interaction with its receptor IFNGR1 to affect gene regulation. Upon IFNG binding, IFNGR1 intracellular domain opens out to allow association of downstream signaling components JAK2, JAK1 and STAT1, leading to STAT1 activation, nuclear translocation and transcription of IFNG-regulated genes. Many of the induced genes are transcription factors such as IRF1 that are able to further drive regulation of a next wave of transcription. Plays a role in class I antigen presentation pathway by inducing a replacement of catalytic proteasome subunits with immunoproteasome subunits. In turn, increases the quantity, quality, and repertoire of peptides for class I MHC loading. Increases the efficiency of peptide generation also by inducing the expression of activator PA28 that associates with the proteasome and alters its proteolytic cleavage preference. Up-regulates as well MHC II complexes on the cell surface by promoting expression of several key molecules such as cathepsins B/CTSB, H/CTSH, and L/CTSL. Participates in the regulation of hematopoietic stem cells during development and under homeostatic conditions by affecting their development, quiescence, and differentiation. The protein is Interferon gamma (IFNG) of Ovis aries (Sheep).